The chain runs to 273 residues: Hydroxyethylthiazole kinase (273 aa).

Methionine 47 provides a ligand contact to substrate. ATP is bound by residues arginine 123 and threonine 172. Position 199 (glycine 199) interacts with substrate.

This sequence belongs to the Thz kinase family. Mg(2+) serves as cofactor.

It catalyses the reaction 5-(2-hydroxyethyl)-4-methylthiazole + ATP = 4-methyl-5-(2-phosphooxyethyl)-thiazole + ADP + H(+). It participates in cofactor biosynthesis; thiamine diphosphate biosynthesis; 4-methyl-5-(2-phosphoethyl)-thiazole from 5-(2-hydroxyethyl)-4-methylthiazole: step 1/1. Functionally, catalyzes the phosphorylation of the hydroxyl group of 4-methyl-5-beta-hydroxyethylthiazole (THZ). This is Hydroxyethylthiazole kinase from Ruminiclostridium cellulolyticum (strain ATCC 35319 / DSM 5812 / JCM 6584 / H10) (Clostridium cellulolyticum).